A 363-amino-acid chain; its full sequence is Caffeic acid 3-O-methyltransferase (363 aa).

Position 130 to 136 (130 to 136 (MNQDKVL)) interacts with substrate. The interval 162–180 (AFEYHGKDPRFNKVFNQGM) is substrate binding. Positions 208, 231, 251, 252, and 265 each coordinate S-adenosyl-L-methionine. The Proton acceptor role is filled by His269.

Belongs to the class I-like SAM-binding methyltransferase superfamily. Cation-independent O-methyltransferase family. COMT subfamily. Homodimer.

The enzyme catalyses (E)-caffeate + S-adenosyl-L-methionine = (E)-ferulate + S-adenosyl-L-homocysteine + H(+). The protein operates within aromatic compound metabolism; phenylpropanoid biosynthesis. Its function is as follows. Catalyzes the conversion of caffeic acid to ferulic acid and of 5-hydroxyferulic acid to sinapic acid. The resulting products may subsequently be converted to the corresponding alcohols that are incorporated into lignins. This is Caffeic acid 3-O-methyltransferase (COMT1) from Catharanthus roseus (Madagascar periwinkle).